A 126-amino-acid polypeptide reads, in one-letter code: Small ribosomal subunit protein uS12 (126 aa).

Aspartate 89 is modified (3-methylthioaspartic acid).

The protein belongs to the universal ribosomal protein uS12 family. As to quaternary structure, part of the 30S ribosomal subunit. Contacts proteins S8 and S17. May interact with IF1 in the 30S initiation complex.

In terms of biological role, with S4 and S5 plays an important role in translational accuracy. Functionally, interacts with and stabilizes bases of the 16S rRNA that are involved in tRNA selection in the A site and with the mRNA backbone. Located at the interface of the 30S and 50S subunits, it traverses the body of the 30S subunit contacting proteins on the other side and probably holding the rRNA structure together. The combined cluster of proteins S8, S12 and S17 appears to hold together the shoulder and platform of the 30S subunit. This Polynucleobacter necessarius subsp. necessarius (strain STIR1) protein is Small ribosomal subunit protein uS12.